The sequence spans 141 residues: Pyrophosphate-energized proton pump (141 aa).

3 helical membrane passes run 11–31 (GLIA…TLTV), 46–66 (GTNL…IVVI), and 121–141 (LAGL…AGMI).

The protein belongs to the H(+)-translocating pyrophosphatase (TC 3.A.10) family. In terms of assembly, homodimer. Requires Mg(2+) as cofactor.

It is found in the cell inner membrane. It carries out the reaction diphosphate + H2O + H(+)(in) = 2 phosphate + 2 H(+)(out). Its function is as follows. Proton pump that utilizes the energy of pyrophosphate hydrolysis as the driving force for proton movement across the membrane. Generates a proton motive force. In Anaplasma marginale, this protein is Pyrophosphate-energized proton pump (hppA).